The sequence spans 52 residues: MVAYWRQAGLSYIRFSQICAKAVRDALKTEFKANAEKTSGSSIKIVKVSKKE.

Lys21, Lys32, and Lys37 each carry N6-acetyllysine; alternate. Residues Lys21, Lys32, and Lys37 each carry the N6-succinyllysine; alternate modification. At Lys44 the chain carries N6-acetyllysine.

This sequence belongs to the eukaryotic ATPase epsilon family. Component of the ATP synthase complex composed at least of ATP5F1A/subunit alpha, ATP5F1B/subunit beta, ATP5MC1/subunit c (homooctomer), MT-ATP6/subunit a, MT-ATP8/subunit 8, ATP5ME/subunit e, ATP5MF/subunit f, ATP5MG/subunit g, ATP5MK/subunit k, ATP5MJ/subunit j, ATP5F1C/subunit gamma, ATP5F1D/subunit delta, ATP5F1E/subunit epsilon, ATP5PF/subunit F6, ATP5PB/subunit b, ATP5PD/subunit d, ATP5PO/subunit OSCP. ATP synthase complex consists of a soluble F(1) head domain (subunits alpha(3) and beta(3)) - the catalytic core - and a membrane F(0) domain - the membrane proton channel (subunits c, a, 8, e, f, g, k and j). These two domains are linked by a central stalk (subunits gamma, delta, and epsilon) rotating inside the F1 region and a stationary peripheral stalk (subunits F6, b, d, and OSCP).

It localises to the mitochondrion. The protein resides in the mitochondrion inner membrane. Subunit epsilon, of the mitochondrial membrane ATP synthase complex (F(1)F(0) ATP synthase or Complex V) that produces ATP from ADP in the presence of a proton gradient across the membrane which is generated by electron transport complexes of the respiratory chain. ATP synthase complex consist of a soluble F(1) head domain - the catalytic core - and a membrane F(1) domain - the membrane proton channel. These two domains are linked by a central stalk rotating inside the F(1) region and a stationary peripheral stalk. During catalysis, ATP synthesis in the catalytic domain of F(1) is coupled via a rotary mechanism of the central stalk subunits to proton translocation. In vivo, can only synthesize ATP although its ATP hydrolase activity can be activated artificially in vitro. May be essential for the assembly of F(1) and may play an important role in the incorporation of the hydrophobic subunit c into the F(1)-c oligomer rotor of the mitochondrial ATP synthase complex. The polypeptide is ATP synthase F(1) complex subunit epsilon, mitochondrial (Mus musculus (Mouse)).